Here is a 221-residue protein sequence, read N- to C-terminus: Adenylate kinase (221 aa).

Position 10-15 (10-15 (GAGKGT)) interacts with ATP. The tract at residues 30–59 (STGDMLRAAVKAGTEFGVAAKKIMDAGGLV) is NMP. Residues threonine 31, arginine 36, 57–59 (GLV), 85–88 (GFPR), and glutamine 92 each bind AMP. The interval 122–159 (GRRVHPASGRTYHIKYNPPKVEGKDDVTGDALIQRDDD) is LID. Residues arginine 123 and 132–133 (TY) contribute to the ATP site. AMP contacts are provided by arginine 156 and arginine 167. Position 207 (glycine 207) interacts with ATP.

The protein belongs to the adenylate kinase family. Monomer.

It is found in the cytoplasm. It carries out the reaction AMP + ATP = 2 ADP. It functions in the pathway purine metabolism; AMP biosynthesis via salvage pathway; AMP from ADP: step 1/1. Catalyzes the reversible transfer of the terminal phosphate group between ATP and AMP. Plays an important role in cellular energy homeostasis and in adenine nucleotide metabolism. The protein is Adenylate kinase of Polynucleobacter asymbioticus (strain DSM 18221 / CIP 109841 / QLW-P1DMWA-1) (Polynucleobacter necessarius subsp. asymbioticus).